Consider the following 427-residue polypeptide: Gamma-glutamyl phosphate reductase (427 aa).

It belongs to the gamma-glutamyl phosphate reductase family.

It is found in the cytoplasm. The catalysed reaction is L-glutamate 5-semialdehyde + phosphate + NADP(+) = L-glutamyl 5-phosphate + NADPH + H(+). It participates in amino-acid biosynthesis; L-proline biosynthesis; L-glutamate 5-semialdehyde from L-glutamate: step 2/2. Catalyzes the NADPH-dependent reduction of L-glutamate 5-phosphate into L-glutamate 5-semialdehyde and phosphate. The product spontaneously undergoes cyclization to form 1-pyrroline-5-carboxylate. This Allorhizobium ampelinum (strain ATCC BAA-846 / DSM 112012 / S4) (Agrobacterium vitis (strain S4)) protein is Gamma-glutamyl phosphate reductase.